We begin with the raw amino-acid sequence, 298 residues long: Ribosomal RNA small subunit methyltransferase H (298 aa).

Residues 35–37 (GGH), aspartate 55, phenylalanine 82, aspartate 100, and glutamine 107 contribute to the S-adenosyl-L-methionine site.

It belongs to the methyltransferase superfamily. RsmH family.

It is found in the cytoplasm. It catalyses the reaction cytidine(1402) in 16S rRNA + S-adenosyl-L-methionine = N(4)-methylcytidine(1402) in 16S rRNA + S-adenosyl-L-homocysteine + H(+). Functionally, specifically methylates the N4 position of cytidine in position 1402 (C1402) of 16S rRNA. The chain is Ribosomal RNA small subunit methyltransferase H from Chlamydia felis (strain Fe/C-56) (Chlamydophila felis).